A 183-amino-acid polypeptide reads, in one-letter code: Apo-citrate lyase phosphoribosyl-dephospho-CoA transferase (183 aa).

It belongs to the CitX family.

It carries out the reaction apo-[citrate lyase ACP] + 2'-(5''-triphospho-alpha-D-ribosyl)-3'-dephospho-CoA = holo-[citrate lyase ACP] + diphosphate. Functionally, transfers 2-(5''-triphosphoribosyl)-3'-dephosphocoenzyme-A on a serine residue to the apo-acyl carrier protein (gamma chain) of the citrate lyase to yield holo-acyl carrier protein. This chain is Apo-citrate lyase phosphoribosyl-dephospho-CoA transferase, found in Citrobacter koseri (strain ATCC BAA-895 / CDC 4225-83 / SGSC4696).